A 188-amino-acid polypeptide reads, in one-letter code: Peptidyl-tRNA hydrolase (188 aa).

Residue tyrosine 14 coordinates tRNA. Residue histidine 19 is the Proton acceptor of the active site. The tRNA site is built by tyrosine 64, asparagine 66, and asparagine 112.

The protein belongs to the PTH family. As to quaternary structure, monomer.

It is found in the cytoplasm. It catalyses the reaction an N-acyl-L-alpha-aminoacyl-tRNA + H2O = an N-acyl-L-amino acid + a tRNA + H(+). In terms of biological role, hydrolyzes ribosome-free peptidyl-tRNAs (with 1 or more amino acids incorporated), which drop off the ribosome during protein synthesis, or as a result of ribosome stalling. Functionally, catalyzes the release of premature peptidyl moieties from peptidyl-tRNA molecules trapped in stalled 50S ribosomal subunits, and thus maintains levels of free tRNAs and 50S ribosomes. This Bacillus licheniformis (strain ATCC 14580 / DSM 13 / JCM 2505 / CCUG 7422 / NBRC 12200 / NCIMB 9375 / NCTC 10341 / NRRL NRS-1264 / Gibson 46) protein is Peptidyl-tRNA hydrolase.